A 198-amino-acid polypeptide reads, in one-letter code: Recombination protein RecR (198 aa).

The C4-type zinc finger occupies 57–72; it reads CSTCQTLTDQDPCAIC. One can recognise a Toprim domain in the interval 80-175; it reads RMICVVEGVP…KVTRIAQGVP (96 aa).

Belongs to the RecR family.

In terms of biological role, may play a role in DNA repair. It seems to be involved in an RecBC-independent recombinational process of DNA repair. It may act with RecF and RecO. The protein is Recombination protein RecR of Anaeromyxobacter dehalogenans (strain 2CP-C).